The sequence spans 332 residues: Acryloyl-coenzyme A reductase (332 aa).

Zn(2+) is bound at residue cysteine 38. Residue tyrosine 39 participates in NADP(+) binding. Residues histidine 60, aspartate 90, cysteine 93, cysteine 96, cysteine 104, and cysteine 146 each coordinate Zn(2+). Residues 172-175 (SGGV) and 194-196 (TTS) each bind NADP(+).

The protein belongs to the zinc-containing alcohol dehydrogenase family. In terms of assembly, monomer. It depends on Zn(2+) as a cofactor.

It carries out the reaction propanoyl-CoA + NADP(+) = acryloyl-CoA + NADPH + H(+). Plays a role in autotrophic carbon fixation via the 3-hydroxypropionate/4-hydroxybutyrate cycle. Catalyzes the acryloyl-CoA dependent NADPH oxidation and formation of propionyl-CoA. This chain is Acryloyl-coenzyme A reductase, found in Metallosphaera sedula (strain ATCC 51363 / DSM 5348 / JCM 9185 / NBRC 15509 / TH2).